The sequence spans 184 residues: Rhox homeobox family member 1 (184 aa).

A disordered region spans residues 26-104; the sequence is QLGAASSAEG…GPQPENMQPR (79 aa). A compositionally biased stretch (low complexity) spans 88–99; it reads PAQAAMEGPQPE. Positions 103–162 form a DNA-binding region, homeobox; it reads PRTRRTKFTLLQVEELESVFRHTQYPDVPTRRELAENLGVTEDKVRVWFKNKRARCRRHQ. Positions 155–164 match the Nuclear localization signal motif; it reads RARCRRHQRE.

This sequence belongs to the paired-like homeobox family. PEPP subfamily. In terms of assembly, does not interact with itself. Ovary, testis and epididymis. Also detected in the prostate and the mammary gland. Expressed in many tumor cell lines derived from acute lymphocytic leukemia, prostate, endometrial adenocarcinoma, melanoma, bladder carcinoma, colon carcinoma, erythroleukemia and breast carcinoma. Not expressed in placenta. In testis, mainly expressed in germ cells, but also detected in somatic cells such as Sertoli cells, Leydig cells and peritubular cells.

It is found in the nucleus. Its function is as follows. Transcription factor maybe involved in reproductive processes. Modulates expression of target genes encoding proteins involved in processes relevant to spermatogenesis. The chain is Rhox homeobox family member 1 from Homo sapiens (Human).